Reading from the N-terminus, the 291-residue chain is 4-hydroxy-tetrahydrodipicolinate synthase (291 aa).

Residue threonine 44 participates in pyruvate binding. Catalysis depends on tyrosine 132, which acts as the Proton donor/acceptor. Lysine 160 (schiff-base intermediate with substrate) is an active-site residue. Valine 202 is a binding site for pyruvate.

The protein belongs to the DapA family. As to quaternary structure, homotetramer; dimer of dimers.

The protein resides in the cytoplasm. The catalysed reaction is L-aspartate 4-semialdehyde + pyruvate = (2S,4S)-4-hydroxy-2,3,4,5-tetrahydrodipicolinate + H2O + H(+). It functions in the pathway amino-acid biosynthesis; L-lysine biosynthesis via DAP pathway; (S)-tetrahydrodipicolinate from L-aspartate: step 3/4. Its function is as follows. Catalyzes the condensation of (S)-aspartate-beta-semialdehyde [(S)-ASA] and pyruvate to 4-hydroxy-tetrahydrodipicolinate (HTPA). This chain is 4-hydroxy-tetrahydrodipicolinate synthase, found in Clostridium perfringens (strain ATCC 13124 / DSM 756 / JCM 1290 / NCIMB 6125 / NCTC 8237 / Type A).